The following is a 264-amino-acid chain: Indole-3-glycerol phosphate synthase (264 aa).

This sequence belongs to the TrpC family.

It carries out the reaction 1-(2-carboxyphenylamino)-1-deoxy-D-ribulose 5-phosphate + H(+) = (1S,2R)-1-C-(indol-3-yl)glycerol 3-phosphate + CO2 + H2O. It functions in the pathway amino-acid biosynthesis; L-tryptophan biosynthesis; L-tryptophan from chorismate: step 4/5. The polypeptide is Indole-3-glycerol phosphate synthase (Lactococcus lactis subsp. cremoris (strain MG1363)).